Here is a 512-residue protein sequence, read N- to C-terminus: Hyaluronidase PH-20 (512 aa).

The first 35 residues, 1-35 (MGELQFKWLFWRSFAESGGTFQTVLIFLFIPYSLT), serve as a signal peptide directing secretion. Cystine bridges form between C60–C351 and C223–C237. An N-linked (GlcNAc...) asparagine glycan is attached at N63. The active-site Proton donor is the E147. Residues N165 and N179 are each glycosylated (N-linked (GlcNAc...) asparagine). N368 carries N-linked (GlcNAc...) asparagine glycosylation. 3 cysteine pairs are disulfide-bonded: C376–C387, C381–C435, and C437–C464. An N-linked (GlcNAc...) asparagine glycan is attached at N408.

Belongs to the glycosyl hydrolase 56 family.

Its subcellular location is the cell membrane. The catalysed reaction is Random hydrolysis of (1-&gt;4)-linkages between N-acetyl-beta-D-glucosamine and D-glucuronate residues in hyaluronate.. Involved in sperm-egg adhesion. Upon fertilization sperm must first penetrate a layer of cumulus cells that surrounds the egg before reaching the zona pellucida. The cumulus cells are embedded in a matrix containing hyaluronic acid which is formed prior to ovulation. This protein aids in penetrating the layer of cumulus cells by digesting hyaluronic acid. The sequence is that of Hyaluronidase PH-20 (Spam1) from Rattus norvegicus (Rat).